A 398-amino-acid chain; its full sequence is 1-deoxy-D-xylulose 5-phosphate reductoisomerase (398 aa).

Residues T10, G11, S12, V13, G36, R37, N38, and N124 each coordinate NADPH. K125 provides a ligand contact to 1-deoxy-D-xylulose 5-phosphate. Residue E126 participates in NADPH binding. D150 serves as a coordination point for Mn(2+). Residues S151, E152, S186, and H209 each coordinate 1-deoxy-D-xylulose 5-phosphate. E152 lines the Mn(2+) pocket. G215 is an NADPH binding site. 4 residues coordinate 1-deoxy-D-xylulose 5-phosphate: S222, N227, K228, and E231. E231 lines the Mn(2+) pocket.

It belongs to the DXR family. Homodimer. Mg(2+) serves as cofactor. The cofactor is Mn(2+).

The catalysed reaction is 2-C-methyl-D-erythritol 4-phosphate + NADP(+) = 1-deoxy-D-xylulose 5-phosphate + NADPH + H(+). The protein operates within isoprenoid biosynthesis; isopentenyl diphosphate biosynthesis via DXP pathway; isopentenyl diphosphate from 1-deoxy-D-xylulose 5-phosphate: step 1/6. Functionally, catalyzes the NADPH-dependent rearrangement and reduction of 1-deoxy-D-xylulose-5-phosphate (DXP) to 2-C-methyl-D-erythritol 4-phosphate (MEP). The chain is 1-deoxy-D-xylulose 5-phosphate reductoisomerase from Serratia proteamaculans (strain 568).